The chain runs to 465 residues: tRNA modification GTPase MnmE (465 aa).

(6S)-5-formyl-5,6,7,8-tetrahydrofolate is bound by residues R27, E91, and R130. The TrmE-type G domain maps to 227-386 (GLSTAIIGRP…LEAKIADLFF (160 aa)). K(+) is bound at residue N237. GTP-binding positions include 237 to 242 (NVGKSS), 256 to 262 (TDIAGTT), and 281 to 284 (DTAG). Mg(2+) is bound at residue S241. The K(+) site is built by T256, I258, and T261. T262 lines the Mg(2+) pocket. K465 is a (6S)-5-formyl-5,6,7,8-tetrahydrofolate binding site.

This sequence belongs to the TRAFAC class TrmE-Era-EngA-EngB-Septin-like GTPase superfamily. TrmE GTPase family. As to quaternary structure, homodimer. Heterotetramer of two MnmE and two MnmG subunits. K(+) is required as a cofactor.

The protein localises to the cytoplasm. Exhibits a very high intrinsic GTPase hydrolysis rate. Involved in the addition of a carboxymethylaminomethyl (cmnm) group at the wobble position (U34) of certain tRNAs, forming tRNA-cmnm(5)s(2)U34. In Enterococcus faecalis (strain ATCC 700802 / V583), this protein is tRNA modification GTPase MnmE.